Reading from the N-terminus, the 237-residue chain is Phosphoribosylaminoimidazole-succinocarboxamide synthase (237 aa).

It belongs to the SAICAR synthetase family.

The enzyme catalyses 5-amino-1-(5-phospho-D-ribosyl)imidazole-4-carboxylate + L-aspartate + ATP = (2S)-2-[5-amino-1-(5-phospho-beta-D-ribosyl)imidazole-4-carboxamido]succinate + ADP + phosphate + 2 H(+). Its pathway is purine metabolism; IMP biosynthesis via de novo pathway; 5-amino-1-(5-phospho-D-ribosyl)imidazole-4-carboxamide from 5-amino-1-(5-phospho-D-ribosyl)imidazole-4-carboxylate: step 1/2. The chain is Phosphoribosylaminoimidazole-succinocarboxamide synthase from Salmonella agona (strain SL483).